Consider the following 590-residue polypeptide: L-fucose isomerase (590 aa).

Active-site proton acceptor residues include E337 and D361. 3 residues coordinate Mn(2+): E337, D361, and H528.

It belongs to the L-fucose isomerase family. Mn(2+) serves as cofactor.

It localises to the cytoplasm. The enzyme catalyses L-fucose = L-fuculose. It functions in the pathway carbohydrate degradation; L-fucose degradation; L-lactaldehyde and glycerone phosphate from L-fucose: step 1/3. Converts the aldose L-fucose into the corresponding ketose L-fuculose. This chain is L-fucose isomerase, found in Bacteroides fragilis (strain YCH46).